The primary structure comprises 403 residues: Formin-like protein 21b (403 aa).

Residues 1–380 enclose the FH2 domain; that stretch reads MELLFTATLL…KAAKEAEMEK (380 aa). The tract at residues 373–403 is disordered; that stretch reads AKEAEMEKTKKRVSLTNKKASGVGEEESCLI.

Belongs to the formin-like family. Class-II subfamily.

The sequence is that of Formin-like protein 21b (FH21B) from Arabidopsis thaliana (Mouse-ear cress).